Consider the following 620-residue polypeptide: Chaperone protein HscA homolog (620 aa).

Belongs to the heat shock protein 70 family.

Its function is as follows. Chaperone involved in the maturation of iron-sulfur cluster-containing proteins. Has a low intrinsic ATPase activity which is markedly stimulated by HscB. The chain is Chaperone protein HscA homolog from Bordetella pertussis (strain Tohama I / ATCC BAA-589 / NCTC 13251).